Consider the following 93-residue polypeptide: Co-chaperonin GroES 2 (93 aa).

The segment at 1 to 20 (MQPLGERIVVQREESETTTA) is disordered.

The protein belongs to the GroES chaperonin family. As to quaternary structure, heptamer of 7 subunits arranged in a ring. Interacts with the chaperonin GroEL.

It localises to the cytoplasm. Its function is as follows. Together with the chaperonin GroEL, plays an essential role in assisting protein folding. The GroEL-GroES system forms a nano-cage that allows encapsulation of the non-native substrate proteins and provides a physical environment optimized to promote and accelerate protein folding. GroES binds to the apical surface of the GroEL ring, thereby capping the opening of the GroEL channel. The chain is Co-chaperonin GroES 2 from Rhodopirellula baltica (strain DSM 10527 / NCIMB 13988 / SH1).